Consider the following 455-residue polypeptide: ATP-dependent protease ATPase subunit HslU (455 aa).

ATP is bound by residues valine 23, 65–70 (GVGKTE), aspartate 266, glutamate 333, and arginine 405.

This sequence belongs to the ClpX chaperone family. HslU subfamily. As to quaternary structure, a double ring-shaped homohexamer of HslV is capped on each side by a ring-shaped HslU homohexamer. The assembly of the HslU/HslV complex is dependent on binding of ATP.

The protein localises to the cytoplasm. In terms of biological role, ATPase subunit of a proteasome-like degradation complex; this subunit has chaperone activity. The binding of ATP and its subsequent hydrolysis by HslU are essential for unfolding of protein substrates subsequently hydrolyzed by HslV. HslU recognizes the N-terminal part of its protein substrates and unfolds these before they are guided to HslV for hydrolysis. The sequence is that of ATP-dependent protease ATPase subunit HslU from Xanthomonas campestris pv. campestris (strain 8004).